The following is a 288-amino-acid chain: MSLSGASDKTSDSPDVFQIKIGFIGAGNMAFGVAQGIIASGKVPPSNIIISAPSMNNLPRFKEKGVSVTHSNHEVVGGSRLIFLAVKPHIIPQVLKEISQEVTKEHIIVSMAAGITIATLEELLPAGTHVIRIMPNLPCMLLEGALLLSCGSHAGEQEETLLKTLLGPCGLVEFGPESWIDAHVGLSGSGVAFVYVFAEALADGAVKMGMPSTLARRIAAQTILGAGVLLRDSGKLPAELKAEVCTPGGTTIHGIHALEKGGFRAAAIGAVEAASERARELGNKQKKN.

This sequence belongs to the pyrroline-5-carboxylate reductase family. Homodecamer; composed of 5 homodimers.

The protein resides in the cytoplasm. The enzyme catalyses L-proline + NADP(+) = (S)-1-pyrroline-5-carboxylate + NADPH + 2 H(+). The catalysed reaction is L-proline + NAD(+) = (S)-1-pyrroline-5-carboxylate + NADH + 2 H(+). The protein operates within amino-acid biosynthesis; L-proline biosynthesis; L-proline from L-glutamate 5-semialdehyde: step 1/1. Its function is as follows. Oxidoreductase that catalyzes the last step in proline biosynthesis, which corresponds to the reduction of pyrroline-5-carboxylate (P5C) to L-proline using NAD(P)H. Proline is synthesized from either glutamate or ornithine; both are converted to P5C, and then to proline via pyrroline-5-carboxylate reductases (PYCRs). PYCR3 is exclusively linked to the biosynthesis of proline from ornithine. This is Pyrroline-5-carboxylate reductase 3 from Danio rerio (Zebrafish).